Here is a 211-residue protein sequence, read N- to C-terminus: LexA repressor (211 aa).

The H-T-H motif DNA-binding region spans 29–49 (VREICTAVGLRSTSTVHSHLN). Catalysis depends on for autocatalytic cleavage activity residues Ser-131 and Lys-169.

Belongs to the peptidase S24 family. In terms of assembly, homodimer.

The enzyme catalyses Hydrolysis of Ala-|-Gly bond in repressor LexA.. Functionally, represses a number of genes involved in the response to DNA damage (SOS response), including recA and lexA. In the presence of single-stranded DNA, RecA interacts with LexA causing an autocatalytic cleavage which disrupts the DNA-binding part of LexA, leading to derepression of the SOS regulon and eventually DNA repair. This chain is LexA repressor, found in Clostridioides difficile (strain 630) (Peptoclostridium difficile).